We begin with the raw amino-acid sequence, 113 residues long: Ribonuclease P protein component (113 aa).

This sequence belongs to the RnpA family. Consists of a catalytic RNA component (M1 or rnpB) and a protein subunit.

It catalyses the reaction Endonucleolytic cleavage of RNA, removing 5'-extranucleotides from tRNA precursor.. Its function is as follows. RNaseP catalyzes the removal of the 5'-leader sequence from pre-tRNA to produce the mature 5'-terminus. It can also cleave other RNA substrates such as 4.5S RNA. The protein component plays an auxiliary but essential role in vivo by binding to the 5'-leader sequence and broadening the substrate specificity of the ribozyme. In Vesicomyosocius okutanii subsp. Calyptogena okutanii (strain HA), this protein is Ribonuclease P protein component.